The chain runs to 287 residues: POU domain class 2-associating factor 2 (287 aa).

The OCA domain occupies 10 to 32; it reads KRVYQGVRVKHTVKDLLAEKRSR. Disordered regions lie at residues 24 to 51, 161 to 199, and 247 to 279; these read DLLA…PPFI, TVPD…TQHR, and PKVG…MAWG. Composition is skewed to polar residues over residues 33 to 49 and 180 to 199; these read QTSN…SQPP and LPPS…TQHR.

Belongs to the POU2AF family. As to quaternary structure, interacts with POU2F3 (via the POU domain) in a DNA-dependent manner; this interaction recruits POU2AF2 to chromatin and increases POU2F3 transactivation activity. As to expression, expressed in tuft cells of the small intestine, trachea, thymus, and colon.

It is found in the cytoplasm. It localises to the cytosol. The protein localises to the nucleus. In terms of biological role, transcriptional coactivator of POU2F3. This complex drives the development of tuft cells, a rare chemosensory cells that coordinate immune and neural functions within mucosal epithelial tissues. In Mus musculus (Mouse), this protein is POU domain class 2-associating factor 2.